The following is a 305-amino-acid chain: Sulfate adenylyltransferase subunit 2 (305 aa).

Belongs to the PAPS reductase family. CysD subfamily. In terms of assembly, heterodimer composed of CysD, the smaller subunit, and CysN.

The enzyme catalyses sulfate + ATP + H(+) = adenosine 5'-phosphosulfate + diphosphate. Its pathway is sulfur metabolism; hydrogen sulfide biosynthesis; sulfite from sulfate: step 1/3. In terms of biological role, with CysN forms the ATP sulfurylase (ATPS) that catalyzes the adenylation of sulfate producing adenosine 5'-phosphosulfate (APS) and diphosphate, the first enzymatic step in sulfur assimilation pathway. APS synthesis involves the formation of a high-energy phosphoric-sulfuric acid anhydride bond driven by GTP hydrolysis by CysN coupled to ATP hydrolysis by CysD. This chain is Sulfate adenylyltransferase subunit 2, found in Pseudomonas aeruginosa (strain LESB58).